A 421-amino-acid chain; its full sequence is D-amino acid dehydrogenase (421 aa).

3-17 (VIVLGSGVIGVASAY) is a binding site for FAD.

It belongs to the DadA oxidoreductase family. It depends on FAD as a cofactor.

The enzyme catalyses a D-alpha-amino acid + A + H2O = a 2-oxocarboxylate + AH2 + NH4(+). The protein operates within amino-acid degradation; D-alanine degradation; NH(3) and pyruvate from D-alanine: step 1/1. Oxidative deamination of D-amino acids. The chain is D-amino acid dehydrogenase from Acinetobacter baumannii (strain ATCC 17978 / DSM 105126 / CIP 53.77 / LMG 1025 / NCDC KC755 / 5377).